The chain runs to 119 residues: MVQENKNFATAQAKSIRVSSRKLNLVAAFIRNMKVSEALVQLTFSPKRIAKVVKDCLQSAVANAENNLGLDIDRLVVTKATVGKALVMKRVMPRAKGRATRINKFFSNLYITVTEKEDN.

The protein belongs to the universal ribosomal protein uL22 family. In terms of assembly, part of the 50S ribosomal subunit.

In terms of biological role, this protein binds specifically to 23S rRNA; its binding is stimulated by other ribosomal proteins, e.g. L4, L17, and L20. It is important during the early stages of 50S assembly. It makes multiple contacts with different domains of the 23S rRNA in the assembled 50S subunit and ribosome. Its function is as follows. The globular domain of the protein is located near the polypeptide exit tunnel on the outside of the subunit, while an extended beta-hairpin is found that lines the wall of the exit tunnel in the center of the 70S ribosome. The sequence is that of Large ribosomal subunit protein uL22 from Rickettsia conorii (strain ATCC VR-613 / Malish 7).